A 459-amino-acid polypeptide reads, in one-letter code: uncharacterized protein (459 aa).

Positions 5 to 63 constitute a TRAM domain; the sequence is PVEEGQKFPLTIRRMGINGEGIGYFKKAVVFVPGAITGEEVVVEAVKVRDRFTEAKLNK. 4 residues coordinate [4Fe-4S] cluster: Cys-76, Cys-82, Cys-85, and Cys-166. Residues Gln-290, Tyr-319, Asp-340, and Asp-388 each coordinate S-adenosyl-L-methionine. Cys-415 serves as the catalytic Nucleophile.

This sequence belongs to the class I-like SAM-binding methyltransferase superfamily. RNA M5U methyltransferase family.

This is an uncharacterized protein from Listeria monocytogenes serovar 1/2a (strain ATCC BAA-679 / EGD-e).